The chain runs to 237 residues: Flagellar L-ring protein (237 aa).

An N-terminal signal peptide occupies residues 1–24 (MNRLSVPRFSVLIASLCGITLLSG). Cysteine 25 carries the N-palmitoyl cysteine lipid modification. Cysteine 25 carries S-diacylglycerol cysteine lipidation.

It belongs to the FlgH family. As to quaternary structure, the basal body constitutes a major portion of the flagellar organelle and consists of four rings (L,P,S, and M) mounted on a central rod.

It is found in the cell outer membrane. Its subcellular location is the bacterial flagellum basal body. Its function is as follows. Assembles around the rod to form the L-ring and probably protects the motor/basal body from shearing forces during rotation. The protein is Flagellar L-ring protein of Pseudomonas syringae pv. syringae (strain B728a).